A 122-amino-acid chain; its full sequence is Large ribosomal subunit protein uL14 (122 aa).

The protein belongs to the universal ribosomal protein uL14 family. As to quaternary structure, part of the 50S ribosomal subunit. Forms a cluster with proteins L3 and L19. In the 70S ribosome, L14 and L19 interact and together make contacts with the 16S rRNA in bridges B5 and B8.

Its function is as follows. Binds to 23S rRNA. Forms part of two intersubunit bridges in the 70S ribosome. The polypeptide is Large ribosomal subunit protein uL14 (Cytophaga hutchinsonii (strain ATCC 33406 / DSM 1761 / CIP 103989 / NBRC 15051 / NCIMB 9469 / D465)).